The sequence spans 341 residues: Platelet-activating factor receptor (341 aa).

The Extracellular portion of the chain corresponds to 1-16; it reads MEQNGSFRVDSEFRYT. N-linked (GlcNAc...) asparagine glycosylation is present at asparagine 4. A helical transmembrane segment spans residues 17–38; the sequence is LFPIVYSVIFVLGVVANGYVLW. The Cytoplasmic portion of the chain corresponds to 39 to 54; sequence VFATLYPSKKLNEIKI. The chain crosses the membrane as a helical span at residues 55 to 74; sequence FMVNLTVADLLFLMTLPLWI. The Extracellular segment spans residues 75–91; it reads VYYSNEGDWIVHKFLCN. Cysteine 90 and cysteine 173 are disulfide-bonded. The chain crosses the membrane as a helical span at residues 92 to 113; the sequence is LAGCLFFINTYCSVAFLGVITY. Topologically, residues 114-133 are cytoplasmic; the sequence is NRYQAVAYPIKTAQATTRKR. Residues 134 to 155 traverse the membrane as a helical segment; that stretch reads GITLSLVIWISIAATASYFLAT. Residues 156–184 lie on the Extracellular side of the membrane; sequence DSTNVVPKKDGSGNITRCFEHYEPYSVPI. An N-linked (GlcNAc...) asparagine glycan is attached at asparagine 169. A helical transmembrane segment spans residues 185-205; that stretch reads LVVHIFITSCFFLVFFLIFYC. The Cytoplasmic segment spans residues 206-233; that stretch reads NMVIIHTLLTRPVRQQRKPEVKRRALWM. The helical transmembrane segment at 234-254 threads the bilayer; it reads VCTVLAVFVICFVPHHVVQLP. The Extracellular portion of the chain corresponds to 255 to 275; sequence WTLAELGYQTNFHQAINDAHQ. Residues 276–295 form a helical membrane-spanning segment; it reads ITLCLLSTNCVLDPVIYCFL. Over 296 to 341 the chain is Cytoplasmic; sequence TKKFRKHLSEKFYSMRSSRKCSRATSDTCTEVMMPANQTPVLPLKN.

The protein belongs to the G-protein coupled receptor 1 family. Interacts with ARRB1. As to expression, present in almost all organs including spleen, small intestine, kidney, lung, liver and brain.

Its subcellular location is the cell membrane. Its function is as follows. Receptor for platelet activating factor, a chemotactic phospholipid mediator that possesses potent inflammatory, smooth-muscle contractile and hypotensive activity. Seems to mediate its action via a G protein that activates a phosphatidylinositol-calcium second messenger system. This Rattus norvegicus (Rat) protein is Platelet-activating factor receptor (Ptafr).